A 143-amino-acid chain; its full sequence is MGKPAGLNAARKLRNHRREERWADAHYKKRLLGTAYKSSPFGGSSHAKGIVVEKIGVEAKQPNSAIRKCVRVQLIKNGKKVTAFVPHDGCLNFVDENDEVLLSGFGRKGKAKGDIPGVRFKVVKVAGVGLSALFHEKKEKPRA.

Position 62 is a 3,4-dihydroxyproline (Pro62).

Belongs to the universal ribosomal protein uS12 family. As to quaternary structure, component of the small ribosomal subunit (SSU). Mature yeast ribosomes consist of a small (40S) and a large (60S) subunit. The 40S small subunit contains 1 molecule of ribosomal RNA (18S rRNA) and at least 33 different proteins. The large 60S subunit contains 3 rRNA molecules (25S, 5.8S and 5S rRNA) and at least 46 different proteins. Post-translationally, hydroxylation at Pro-62 affects translation termination efficiency.

It localises to the cytoplasm. The protein resides in the nucleus. The protein localises to the nucleolus. Functionally, component of the ribosome, a large ribonucleoprotein complex responsible for the synthesis of proteins in the cell. The small ribosomal subunit (SSU) binds messenger RNAs (mRNAs) and translates the encoded message by selecting cognate aminoacyl-transfer RNA (tRNA) molecules. The large subunit (LSU) contains the ribosomal catalytic site termed the peptidyl transferase center (PTC), which catalyzes the formation of peptide bonds, thereby polymerizing the amino acids delivered by tRNAs into a polypeptide chain. The nascent polypeptides leave the ribosome through a tunnel in the LSU and interact with protein factors that function in enzymatic processing, targeting, and the membrane insertion of nascent chains at the exit of the ribosomal tunnel. This chain is Small ribosomal subunit protein uS12B (rps2302), found in Schizosaccharomyces pombe (strain 972 / ATCC 24843) (Fission yeast).